The primary structure comprises 357 residues: Mitogen-activated protein kinase kinase SIPKK (357 aa).

The Protein kinase domain maps to 70–330 (FEAVKVIGKG…ANELMRHPFI (261 aa)). ATP-binding positions include 76–84 (IGKGNGGIV) and lysine 99. Aspartate 192 acts as the Proton acceptor in catalysis.

It belongs to the protein kinase superfamily. STE Ser/Thr protein kinase family. MAP kinase kinase subfamily. Interacts with SIPK.

It catalyses the reaction L-tyrosyl-[protein] + ATP = O-phospho-L-tyrosyl-[protein] + ADP + H(+). The enzyme catalyses L-seryl-[protein] + ATP = O-phospho-L-seryl-[protein] + ADP + H(+). The catalysed reaction is L-threonyl-[protein] + ATP = O-phospho-L-threonyl-[protein] + ADP + H(+). Its function is as follows. Phosphorylates myelin basic protein (MBP) in vitro. May be involved in disease resistance. The polypeptide is Mitogen-activated protein kinase kinase SIPKK (Nicotiana tabacum (Common tobacco)).